Here is a 207-residue protein sequence, read N- to C-terminus: MSGRKKSLLKVIILGDSSVGKTSLMNQYVNKRFSNQYKATIGADFCTKEVVVNDRVVTMQIWDTAGQERFQSLGVAFYRGADCCVLVYDVTAPNSFKNLDSWRDEFLIQASPRDPDHFPFVVLGNKVDLDNRQVSTRRAQQWCQSKNDIPYYETSAKEGINVEMAFQVIAKNALELEAEAEVINDFPDQITLGSQNNRPGNPDNCQC.

GTP contacts are provided by residues 15–22 (GDSSVGKT), 34–40 (SNQYKAT), 63–67 (DTAGQ), 125–128 (NKVD), and 156–157 (AK). The Effector region signature appears at 37–45 (YKATIGADF). 2 S-geranylgeranyl cysteine lipidation sites follow: C205 and C207.

Belongs to the small GTPase superfamily. Rab family. Expressed in eye (at protein level).

It is found in the early endosome membrane. The protein localises to the late endosome membrane. Its subcellular location is the lysosome membrane. It localises to the cytoplasmic vesicle. The protein resides in the autophagosome membrane. It is found in the autolysosome membrane. The protein localises to the presynapse. Its subcellular location is the perikaryon. The enzyme catalyses GTP + H2O = GDP + phosphate + H(+). Functionally, small GTPase which cycles between active GTP-bound and inactive GDP-bound states. In its active state, binds to a variety of effector proteins playing a key role in the regulation of endo-lysosomal trafficking. Involved in microtubule minus and plus end-directed endosomal migration and positioning, and endosome-lysosome transport through different protein-protein interaction cascades. Governs early-to-late endosomal to lysosomal maturation. Controls endocytic cargo sorting towards the late endosome facilitating its eventual endolysosomal-mediated degradation. Together with Rab2 involved in promoting fusion of autophagosomes and endosomes with lysosomes probably through recruitment of the HOPS tethering complex. Involved in biosynthetic transport to lysosomes. Involved in establishing morphogen concentration gradients, for example of the TGF-beta homolog dpp/decapentaplegic, during pattern formation and organogenesis. Together with the Mon1-Ccz1 complex, required for autolysosome formation in fat cells and autophagic degradation during starvation-induced basal and developmental autophagy. Together with Mon1, regulates levels of postsynaptic glutamate receptor GluRIIA in the neuromuscular junction (NMJ) presynapse. Required for autophagocytosis-dependent remodeling of myofibrils and transverse-tubules (T-tubules) during metamorphosis. Involved in intracellular trafficking of the carbohydrate transporter Tret1 in glial cells of the blood brain barrier, influencing its subcellular localization and protein levels. The sequence is that of Ras-related protein Rab7 from Drosophila melanogaster (Fruit fly).